Consider the following 344-residue polypeptide: tRNA N6-adenosine threonylcarbamoyltransferase (344 aa).

Fe cation contacts are provided by His110 and His114. Residues 133–137, Asp166, Gly179, and Asn278 contribute to the substrate site; that span reads VVSGA. Asp303 contacts Fe cation.

This sequence belongs to the KAE1 / TsaD family. Requires Fe(2+) as cofactor.

The protein resides in the cytoplasm. The catalysed reaction is L-threonylcarbamoyladenylate + adenosine(37) in tRNA = N(6)-L-threonylcarbamoyladenosine(37) in tRNA + AMP + H(+). Required for the formation of a threonylcarbamoyl group on adenosine at position 37 (t(6)A37) in tRNAs that read codons beginning with adenine. Is involved in the transfer of the threonylcarbamoyl moiety of threonylcarbamoyl-AMP (TC-AMP) to the N6 group of A37, together with TsaE and TsaB. TsaD likely plays a direct catalytic role in this reaction. This Chlamydia abortus (strain DSM 27085 / S26/3) (Chlamydophila abortus) protein is tRNA N6-adenosine threonylcarbamoyltransferase.